Here is a 1520-residue protein sequence, read N- to C-terminus: Integrator complex subunit 3 homolog (1520 aa).

Disordered stretches follow at residues 1–23 (MMNQ…QQLT), 523–671 (QLHS…NSRV), 689–801 (VISQ…SPST), 813–922 (DEPP…QNIK), 1116–1177 (FSNS…NITN), and 1489–1520 (QSSN…FRKE). Low complexity-rich tracts occupy residues 527 to 549 (QQQQ…QQPP) and 557 to 595 (QPIN…QQQP). The span at 596 to 612 (PQQPPPQQQPQQQPPQQ) shows a compositional bias: pro residues. The segment covering 613–625 (QPQQQPQQQQPQL) has biased composition (low complexity). Residues 626 to 639 (NISTGNLPNIQQPM) show a composition bias toward polar residues. Low complexity-rich tracts occupy residues 642–669 (SPPL…TNNS), 694–717 (PQSQ…SPPL), and 725–735 (QQQPSQQLPSQ). The segment covering 736-752 (IVKNSPPNLSMTNENIS) has biased composition (polar residues). The segment covering 768 to 789 (SPLINSSNSNITTPNPDSQSQI) has biased composition (low complexity). Residues 819 to 828 (SKSSPTQSNI) show a composition bias toward polar residues. Positions 837-882 (PPQTTISSSSPLLQPQTQPQPQTQPQPQTLQQSTTPSLSSSSTPTI) are enriched in low complexity. Over residues 898–918 (QPPPPPPSSQPLQPPPPPPPS) the composition is skewed to pro residues. Low complexity-rich tracts occupy residues 1116-1130 (FSNS…NNNN) and 1137-1177 (QQQQ…NITN). The segment covering 1489 to 1504 (QSSNIKNDNNPTLSKH) has biased composition (polar residues).

It belongs to the Integrator subunit 3 family. In terms of assembly, component of the Integrator complex. The core complex associates with protein phosphatase 2A subunits, to form the Integrator-PP2A (INTAC) complex. Component of the SOSS complex.

It is found in the nucleus. Its subcellular location is the cytoplasm. Its function is as follows. Component of the integrator complex, a multiprotein complex that terminates RNA polymerase II (Pol II) transcription in the promoter-proximal region of genes. The integrator complex provides a quality checkpoint during transcription elongation by driving premature transcription termination of transcripts that are unfavorably configured for transcriptional elongation: the complex terminates transcription by (1) catalyzing dephosphorylation of the C-terminal domain (CTD) of Pol II subunit polr2a, (2) degrading the exiting nascent RNA transcript via endonuclease activity and (3) promoting the release of Pol II from bound DNA. The integrator complex is also involved in terminating the synthesis of non-coding Pol II transcripts, such as enhancer RNAs (eRNAs), small nuclear RNAs (snRNAs), telomerase RNAs and long non-coding RNAs (lncRNAs). Component of the SOSS complex, a multiprotein complex that functions downstream of the MRN complex to promote DNA repair and G2/M checkpoint. The SOSS complex associates with single-stranded DNA at DNA lesions and influences diverse endpoints in the cellular DNA damage response including cell-cycle checkpoint activation, recombinational repair and maintenance of genomic stability. The SOSS complex is required for efficient homologous recombination-dependent repair of double-strand breaks (DSBs) and ATM-dependent signaling pathways. In the SOSS complex, it is required for the assembly of the complex and for stabilization of the complex at DNA damage sites. The polypeptide is Integrator complex subunit 3 homolog (ints3) (Dictyostelium discoideum (Social amoeba)).